Here is a 340-residue protein sequence, read N- to C-terminus: Coproporphyrin III ferrochelatase (340 aa).

Fe-coproporphyrin III is bound by residues Ser-52 and Tyr-116. His-172 and Glu-255 together coordinate Fe(2+).

Belongs to the ferrochelatase family.

The protein localises to the cytoplasm. The catalysed reaction is Fe-coproporphyrin III + 2 H(+) = coproporphyrin III + Fe(2+). It participates in porphyrin-containing compound metabolism; protoheme biosynthesis. In terms of biological role, involved in coproporphyrin-dependent heme b biosynthesis. Catalyzes the insertion of ferrous iron into coproporphyrin III to form Fe-coproporphyrin III. This is Coproporphyrin III ferrochelatase from Mycobacterium ulcerans (strain Agy99).